The following is a 475-amino-acid chain: Zinc-regulated GTPase metalloprotein activator 1 (475 aa).

50–57 serves as a coordination point for GTP; it reads GFLGSGKT. The Zn(2+) site is built by C116, C118, and C119. A CXCC motif motif is present at residues 116–119; sequence CICC. GTP is bound by residues 119-123 and 229-232; these read CTMRE and NKCD. The CobW C-terminal domain occupies 302 to 420; it reads IKSFIYKARR…LIESELNNCL (119 aa). Residues 440-467 adopt a coiled-coil conformation; that stretch reads IQLDEELEEEELEEEEEEGEYKDEIEMK. A compositionally biased stretch (acidic residues) spans 445–460; that stretch reads ELEEEELEEEEEEGEY. The interval 445–475 is disordered; sequence ELEEEELEEEEEEGEYKDEIEMKVDGSKFKK. A compositionally biased stretch (basic and acidic residues) spans 461-475; sequence KDEIEMKVDGSKFKK.

The protein belongs to the SIMIBI class G3E GTPase family. ZNG1 subfamily.

The catalysed reaction is GTP + H2O = GDP + phosphate + H(+). Zinc chaperone that directly transfers zinc cofactor to target metalloproteins, thereby activating them. Zinc is transferred from the CXCC motif in the GTPase domain to the zinc binding site in target proteins in a process requiring GTP hydrolysis. The chain is Zinc-regulated GTPase metalloprotein activator 1 from Dictyostelium discoideum (Social amoeba).